The chain runs to 445 residues: Maltoporin 2 (445 aa).

An N-terminal signal peptide occupies residues 1–25 (MKMKAKWLPIAAAVTAALASQAAFA).

Belongs to the porin LamB (TC 1.B.3) family. In terms of assembly, homotrimer formed of three 18-stranded antiparallel beta-barrels, containing three independent channels.

It is found in the cell outer membrane. It catalyses the reaction beta-maltose(in) = beta-maltose(out). Involved in the transport of maltose and maltodextrins. In Aeromonas salmonicida (strain A449), this protein is Maltoporin 2.